We begin with the raw amino-acid sequence, 155 residues long: Cytochrome c oxidase subunit 4, mitochondrial (155 aa).

A mitochondrion-targeting transit peptide spans 1–25 (MLSLRQSIRFFKPATRTLCSSRYLL). Thr55 carries the post-translational modification Phosphothreonine. Residues Cys111, His119, Cys134, and Cys137 each coordinate Zn(2+).

The protein belongs to the cytochrome c oxidase subunit 5B family. As to quaternary structure, component of the cytochrome c oxidase (complex IV, CIV), a multisubunit enzyme composed of 12 subunits. The complex is composed of a catalytic core of 3 subunits COX1, COX2 and COX3, encoded in the mitochondrial DNA, and 9 supernumerary subunits COX4, COX5A (or COX5B), COX6, COX7, COX8, COX9, COX12, COX13 and COX26, which are encoded in the nuclear genome. The complex exists as a monomer or a dimer and forms supercomplexes (SCs) in the inner mitochondrial membrane with a dimer of ubiquinol-cytochrome c oxidoreductase (cytochrome b-c1 complex, complex III, CIII), resulting in 2 different assemblies (supercomplexes III(2)IV and III(2)IV(2)).

The protein localises to the mitochondrion inner membrane. It participates in energy metabolism; oxidative phosphorylation. In terms of biological role, component of the cytochrome c oxidase, the last enzyme in the mitochondrial electron transport chain which drives oxidative phosphorylation. The respiratory chain contains 3 multisubunit complexes succinate dehydrogenase (complex II, CII), ubiquinol-cytochrome c oxidoreductase (cytochrome b-c1 complex, complex III, CIII) and cytochrome c oxidase (complex IV, CIV), that cooperate to transfer electrons derived from NADH and succinate to molecular oxygen, creating an electrochemical gradient over the inner membrane that drives transmembrane transport and the ATP synthase. Cytochrome c oxidase is the component of the respiratory chain that catalyzes the reduction of oxygen to water. Electrons originating from reduced cytochrome c in the intermembrane space (IMS) are transferred via the dinuclear copper A center (CU(A)) of COX2 and heme A of COX1 to the active site in COX1, a binuclear center (BNC) formed by heme A3 and copper B (CU(B)). The BNC reduces molecular oxygen to 2 water molecules using 4 electrons from cytochrome c in the IMS and 4 protons from the mitochondrial matrix. The protein is Cytochrome c oxidase subunit 4, mitochondrial (COX4) of Saccharomyces cerevisiae (strain ATCC 204508 / S288c) (Baker's yeast).